Here is a 464-residue protein sequence, read N- to C-terminus: 3-isopropylmalate dehydratase large subunit (464 aa).

The [4Fe-4S] cluster site is built by cysteine 345, cysteine 405, and cysteine 408.

It belongs to the aconitase/IPM isomerase family. LeuC type 1 subfamily. As to quaternary structure, heterodimer of LeuC and LeuD. It depends on [4Fe-4S] cluster as a cofactor.

It carries out the reaction (2R,3S)-3-isopropylmalate = (2S)-2-isopropylmalate. The protein operates within amino-acid biosynthesis; L-leucine biosynthesis; L-leucine from 3-methyl-2-oxobutanoate: step 2/4. Functionally, catalyzes the isomerization between 2-isopropylmalate and 3-isopropylmalate, via the formation of 2-isopropylmaleate. The sequence is that of 3-isopropylmalate dehydratase large subunit from Bacteroides fragilis (strain ATCC 25285 / DSM 2151 / CCUG 4856 / JCM 11019 / LMG 10263 / NCTC 9343 / Onslow / VPI 2553 / EN-2).